Here is a 316-residue protein sequence, read N- to C-terminus: Ribosomal RNA small subunit methyltransferase H (316 aa).

S-adenosyl-L-methionine contacts are provided by residues 35 to 37 (SGH), Asp55, Phe84, Asp105, and Gln112.

It belongs to the methyltransferase superfamily. RsmH family.

It localises to the cytoplasm. It carries out the reaction cytidine(1402) in 16S rRNA + S-adenosyl-L-methionine = N(4)-methylcytidine(1402) in 16S rRNA + S-adenosyl-L-homocysteine + H(+). Specifically methylates the N4 position of cytidine in position 1402 (C1402) of 16S rRNA. This is Ribosomal RNA small subunit methyltransferase H from Streptococcus pyogenes serotype M49 (strain NZ131).